Here is a 381-residue protein sequence, read N- to C-terminus: Sulfofructose kinase (381 aa).

Residues glycine 10, arginine 72–tyrosine 73, and glycine 100–threonine 103 contribute to the ATP site. Asparagine 101 lines the Mg(2+) pocket. The Proton acceptor role is filled by aspartate 131.

This sequence belongs to the phosphofructokinase type A (PFKA) family. It depends on Mg(2+) as a cofactor.

It carries out the reaction 6-deoxy-6-sulfo-D-fructose + ATP = 6-deoxy-6-sulfo-D-fructose 1-phosphate + ADP + H(+). Part of the sulfo-EMP2 pathway, a D-sulfoquinovose degradation pathway that produces sulfolactate (SL). Phosphorylates 6-deoxy-6-sulfo-D-fructose (SF) to 6-deoxy-6-sulfo-D-fructose 1-phosphate (SFP). The polypeptide is Sulfofructose kinase (Alkalicoccus urumqiensis (Bacillus urumqiensis)).